The primary structure comprises 112 residues: Large ribosomal subunit protein uL22 (112 aa).

Belongs to the universal ribosomal protein uL22 family. Part of the 50S ribosomal subunit.

In terms of biological role, this protein binds specifically to 23S rRNA; its binding is stimulated by other ribosomal proteins, e.g. L4, L17, and L20. It is important during the early stages of 50S assembly. It makes multiple contacts with different domains of the 23S rRNA in the assembled 50S subunit and ribosome. Its function is as follows. The globular domain of the protein is located near the polypeptide exit tunnel on the outside of the subunit, while an extended beta-hairpin is found that lines the wall of the exit tunnel in the center of the 70S ribosome. The polypeptide is Large ribosomal subunit protein uL22 (Anaplasma phagocytophilum (strain HZ)).